Consider the following 577-residue polypeptide: Aspartate--tRNA(Asp/Asn) ligase (577 aa).

Glutamate 171 is a binding site for L-aspartate. Positions 195–198 are aspartate; the sequence is QLFK. Arginine 217 contributes to the L-aspartate binding site. ATP contacts are provided by residues 217–219 and glutamine 226; that span reads RDE. Histidine 444 contributes to the L-aspartate binding site. Glutamate 474 provides a ligand contact to ATP. Arginine 481 is a binding site for L-aspartate. ATP is bound at residue 526–529; that stretch reads GFDR.

It belongs to the class-II aminoacyl-tRNA synthetase family. Type 1 subfamily. In terms of assembly, homodimer.

The protein resides in the cytoplasm. The enzyme catalyses tRNA(Asx) + L-aspartate + ATP = L-aspartyl-tRNA(Asx) + AMP + diphosphate. Functionally, aspartyl-tRNA synthetase with relaxed tRNA specificity since it is able to aspartylate not only its cognate tRNA(Asp) but also tRNA(Asn). Reaction proceeds in two steps: L-aspartate is first activated by ATP to form Asp-AMP and then transferred to the acceptor end of tRNA(Asp/Asn). The polypeptide is Aspartate--tRNA(Asp/Asn) ligase (Helicobacter pylori (strain G27)).